The chain runs to 398 residues: 8-amino-7-oxononanoate synthase (398 aa).

Residue Arg23 coordinates substrate. 110–111 (GY) contacts pyridoxal 5'-phosphate. A substrate-binding site is contributed by His135. Positions 181, 209, and 237 each coordinate pyridoxal 5'-phosphate. Lys240 carries the post-translational modification N6-(pyridoxal phosphate)lysine. Thr354 serves as a coordination point for substrate.

The protein belongs to the class-II pyridoxal-phosphate-dependent aminotransferase family. BioF subfamily. As to quaternary structure, homodimer. Requires pyridoxal 5'-phosphate as cofactor.

It carries out the reaction 6-carboxyhexanoyl-[ACP] + L-alanine + H(+) = (8S)-8-amino-7-oxononanoate + holo-[ACP] + CO2. It participates in cofactor biosynthesis; biotin biosynthesis. In terms of biological role, catalyzes the decarboxylative condensation of pimeloyl-[acyl-carrier protein] and L-alanine to produce 8-amino-7-oxononanoate (AON), [acyl-carrier protein], and carbon dioxide. The polypeptide is 8-amino-7-oxononanoate synthase (Anaeromyxobacter sp. (strain K)).